A 228-amino-acid polypeptide reads, in one-letter code: UPF0758 protein CLK_2387 (228 aa).

In terms of domain architecture, MPN spans K106–I228. Residues H177, H179, and D190 each coordinate Zn(2+). The short motif at H177–D190 is the JAMM motif element.

The protein belongs to the UPF0758 family.

This is UPF0758 protein CLK_2387 from Clostridium botulinum (strain Loch Maree / Type A3).